The sequence spans 692 residues: DNA ligase (692 aa).

Residues 34–38 (DAEYD), 83–84 (SL), and Glu-124 contribute to the NAD(+) site. Lys-126 functions as the N6-AMP-lysine intermediate in the catalytic mechanism. 4 residues coordinate NAD(+): Arg-147, Glu-193, Lys-310, and Lys-334. The Zn(2+) site is built by Cys-428, Cys-431, Cys-446, and Cys-452. Positions 612 to 692 (AGVAGVSGKT…ALLALLAGNA (81 aa)) constitute a BRCT domain.

The protein belongs to the NAD-dependent DNA ligase family. LigA subfamily. Mg(2+) is required as a cofactor. The cofactor is Mn(2+).

It carries out the reaction NAD(+) + (deoxyribonucleotide)n-3'-hydroxyl + 5'-phospho-(deoxyribonucleotide)m = (deoxyribonucleotide)n+m + AMP + beta-nicotinamide D-nucleotide.. Functionally, DNA ligase that catalyzes the formation of phosphodiester linkages between 5'-phosphoryl and 3'-hydroxyl groups in double-stranded DNA using NAD as a coenzyme and as the energy source for the reaction. It is essential for DNA replication and repair of damaged DNA. In Laribacter hongkongensis (strain HLHK9), this protein is DNA ligase.